The primary structure comprises 304 residues: Dihydroorotate dehydrogenase B (NAD(+)), catalytic subunit (304 aa).

FMN is bound by residues Ser-21 and 45–46 (KA). Substrate is bound by residues Lys-45 and 69 to 73 (NAIGL). Positions 99 and 127 each coordinate FMN. Substrate is bound at residue Asn-127. The Nucleophile role is filled by Cys-130. FMN is bound by residues Lys-165 and Ile-191. 192–193 (NT) is a substrate binding site. Residues Gly-217, 243–244 (GG), and 265–266 (GT) each bind FMN.

This sequence belongs to the dihydroorotate dehydrogenase family. Type 1 subfamily. In terms of assembly, heterotetramer of 2 PyrK and 2 PyrD type B subunits. The cofactor is FMN.

The protein resides in the cytoplasm. The catalysed reaction is (S)-dihydroorotate + NAD(+) = orotate + NADH + H(+). The protein operates within pyrimidine metabolism; UMP biosynthesis via de novo pathway; orotate from (S)-dihydroorotate (NAD(+) route): step 1/1. Its function is as follows. Catalyzes the conversion of dihydroorotate to orotate with NAD(+) as electron acceptor. The sequence is that of Dihydroorotate dehydrogenase B (NAD(+)), catalytic subunit (pyrD) from Shouchella clausii (strain KSM-K16) (Alkalihalobacillus clausii).